Reading from the N-terminus, the 1424-residue chain is Serine/threonine-protein kinase LMTK3 (1424 aa).

The N-terminal stretch at 1–20 is a signal peptide; it reads MPAPGALILLAAVSASGCLA. The helical transmembrane segment at 40-60 threads the bilayer; the sequence is AVVLISCSGLLAFIFLLLTCL. The interval 74–95 is disordered; that stretch reads NPEGEDCSGEYTPPAEETSSSQ. In terms of domain architecture, Protein kinase spans 133-411; the sequence is LSYLQEIGSG…SDLQLQLTYL (279 aa). ATP-binding positions include 139–147 and K164; that span reads IGSGWFGKV. Phosphoserine is present on S232. The active-site Proton acceptor is D266. Disordered regions lie at residues 413–465 and 486–516; these read SERP…PDDV and RGAG…PFYE. The segment covering 418 to 439 has biased composition (pro residues); it reads RPPPPPPPPRDGPFPWPWPPSH. R490 carries the post-translational modification Omega-N-methylarginine. The segment covering 496–507 has biased composition (pro residues); the sequence is PWQPASAPPAPH. 2 positions are modified to phosphoserine: S531 and S535. 5 disordered regions span residues 544 to 666, 680 to 964, 976 to 1024, 1041 to 1313, and 1325 to 1424; these read EHGS…PLPC, LERG…MSPE, MSPK…APET, GLEM…RKRK, and LFDQ…PVEN. Positions 571–584 are enriched in polar residues; it reads QTPSEVPQLVSETW. The span at 638–647 shows a compositional bias: acidic residues; that stretch reads AEEEEEESSP. The segment covering 700–713 has biased composition (basic and acidic residues); the sequence is PPEDDSSLRAERGS. Residues 744–758 are compositionally biased toward pro residues; the sequence is RGPPPAPPPPPPPPR. Low complexity predominate over residues 759–791; the sequence is ASAEPAASPDPPSALASPGSGLSSPGPKPGDSG. A compositionally biased stretch (pro residues) spans 818–841; sequence PRAPPEPPDPGAPRPPPDPGPLPL. A compositionally biased stretch (basic and acidic residues) spans 935 to 954; that stretch reads DMKEKVAENGLESPEKEERA. 3 positions are modified to phosphoserine: S947, S962, and S977. Positions 994–1004 are enriched in basic and acidic residues; that stretch reads RNTERPPEIGP. Over residues 1084 to 1094 the composition is skewed to gly residues; it reads GSGGRALGGVG. Over residues 1095–1105 the composition is skewed to low complexity; the sequence is TAPAGGPASAV. Basic and acidic residues predominate over residues 1167–1177; that stretch reads DPLKPERKGPE. Residues 1200 to 1213 are compositionally biased toward low complexity; it reads SRLSLALPPLTLTP. A compositionally biased stretch (gly residues) spans 1231–1241; that stretch reads AAGGEAGGAGA. Over residues 1245–1261 the composition is skewed to acidic residues; sequence AEEDGEDEDEDEEDEEA. The segment covering 1262–1272 has biased composition (basic and acidic residues); sequence AGSRDPGRTRE. Over residues 1329 to 1339 the composition is skewed to polar residues; the sequence is ETPTNELSVQG. Over residues 1348-1360 the composition is skewed to pro residues; that stretch reads STPPAPPTPPHPT.

This sequence belongs to the protein kinase superfamily. Tyr protein kinase family. As to quaternary structure, interacts with ESR1. Interacts with AP-2 complex subunit alpha. It depends on Mg(2+) as a cofactor. Autophosphorylated. As to expression, expressed in brain. Predominantly expressed in cerebral cortex, thalamus, the cerebellum and hippocampal formation (at protein level).

The protein resides in the membrane. It localises to the cell projection. It is found in the axon. The protein localises to the dendrite. Its subcellular location is the golgi apparatus membrane. The enzyme catalyses L-seryl-[protein] + ATP = O-phospho-L-seryl-[protein] + ADP + H(+). It carries out the reaction L-threonyl-[protein] + ATP = O-phospho-L-threonyl-[protein] + ADP + H(+). Its function is as follows. Protein kinase which phosphorylates ESR1 (in vitro) and protects it against proteasomal degradation. May also regulate ESR1 levels indirectly via a PKC-AKT-FOXO3 pathway where it decreases the activity of PKC and the phosphorylation of AKT, thereby increasing binding of transcriptional activator FOXO3 to the ESR1 promoter and increasing ESR1 transcription. Involved in endocytic trafficking of N-methyl-D-aspartate receptors (NMDAR) in neurons. The sequence is that of Serine/threonine-protein kinase LMTK3 (Lmtk3) from Mus musculus (Mouse).